The following is an 896-amino-acid chain: Trehalose-phosphatase (896 aa).

The interval 1–554 (MTTTAQDNSP…SNDDMERKMT (554 aa)) is glycosyltransferase.

This sequence in the N-terminal section; belongs to the glycosyltransferase 20 family. It in the C-terminal section; belongs to the trehalose phosphatase family. In terms of assembly, the trehalose synthase complex is composed of the two catalytic subunits TPS1 and TPS2, and at least one of the two regulatory subunits TPS3 or TSL1. Mg(2+) serves as cofactor.

The protein resides in the cytoplasm. It carries out the reaction alpha,alpha-trehalose 6-phosphate + H2O = alpha,alpha-trehalose + phosphate. The protein operates within carbohydrate biosynthesis. Inhibited by EDTA. Functionally, phosphatase catalytic subunit of the trehalose synthase complex that catalyzes the production of trehalose from glucose-6-phosphate and UDP-alpha-D-glucose in a two step process. The sequence is that of Trehalose-phosphatase from Saccharomyces cerevisiae (strain ATCC 204508 / S288c) (Baker's yeast).